A 215-amino-acid chain; its full sequence is Ribose-5-phosphate isomerase A (215 aa).

Residues 26-29 (TGST), 79-82 (DGAD), and 92-95 (KGGG) each bind substrate. The active-site Proton acceptor is the E101. Residue K119 coordinates substrate.

It belongs to the ribose 5-phosphate isomerase family. Homodimer.

It catalyses the reaction aldehydo-D-ribose 5-phosphate = D-ribulose 5-phosphate. Its pathway is carbohydrate degradation; pentose phosphate pathway; D-ribose 5-phosphate from D-ribulose 5-phosphate (non-oxidative stage): step 1/1. In terms of biological role, catalyzes the reversible conversion of ribose-5-phosphate to ribulose 5-phosphate. The sequence is that of Ribose-5-phosphate isomerase A from Xylella fastidiosa (strain 9a5c).